The primary structure comprises 332 residues: UDP-galactose/UDP-glucose transporter 1 (332 aa).

The next 8 helical transmembrane spans lie at 11–31, 49–69, 80–100, 112–132, 135–155, 206–226, 252–272, and 301–317; these read ILLL…QGVL, HLAF…YIMI, APWW…AMGI, VLAK…VYGI, TFPE…FALL, IMLG…FGLP, ICGA…GSLA, and WGCV…QIYL. Positions 327-332 match the Di-lysine motif motif; it reads KKKQKS.

This sequence belongs to the nucleotide-sugar transporter family. UDP-galactose:UMP antiporter (TC 2.A.7.11) subfamily.

The protein resides in the endoplasmic reticulum membrane. Its function is as follows. Essential sugar transporter required for the transport of UDP-galactose and UDP-glucose from the cytoplasm into the Golgi and the endoplasmic reticulum, to ensure quality control of protein folding. Essential for pollen development and involved in embryo sac progress. This is UDP-galactose/UDP-glucose transporter 1 from Arabidopsis thaliana (Mouse-ear cress).